Reading from the N-terminus, the 87-residue chain is Protein Isd11 (87 aa).

The protein belongs to the complex I LYR family. As to quaternary structure, interacts with IscS; the interaction enhances cysteine desulfurase activity of IscS. Component of a complex, at least composed of IscS, Isd11 and IscU.

The protein resides in the mitochondrion. It functions in the pathway cofactor biosynthesis; iron-sulfur cluster biosynthesis. Functionally, participates in iron-sulfur cluster formation (ISC) pathway for iron-sulfur (Fe-S) cluster biogenesis. Enhances cysteine desulfurase activity of IscS. In Plasmodium falciparum (isolate 3D7), this protein is Protein Isd11.